A 284-amino-acid chain; its full sequence is uncharacterized protein (284 aa).

A helical membrane pass occupies residues 12–32; that stretch reads ILFILFVVAFCVYLVPRVAIN.

The protein belongs to the serine esterase family.

The protein localises to the membrane. This is an uncharacterized protein from Escherichia coli O157:H7.